The sequence spans 132 residues: Small ribosomal subunit protein uS8 (132 aa).

The protein belongs to the universal ribosomal protein uS8 family. As to quaternary structure, part of the 30S ribosomal subunit. Contacts proteins S5 and S12.

Its function is as follows. One of the primary rRNA binding proteins, it binds directly to 16S rRNA central domain where it helps coordinate assembly of the platform of the 30S subunit. This Ureaplasma urealyticum serovar 10 (strain ATCC 33699 / Western) protein is Small ribosomal subunit protein uS8.